The sequence spans 297 residues: MEEFDSEDFSTSEEDEDYVPSGGEYSEDDVNELVKEDEVDGEEQTQKTKGKKRKAQSIPARKRKQGLSLEEEEEDANEESGGSSSEEEDAAAEQEKGIGAEDARKKKEDELWASFLNDVGPKSKVPPSTQVKREEETEETGSSKLLVKAEELEKPKETEKVKITKVFDFAGEEVRVTKEVDATSKEAKSFFKQNEKEKPQTNVPAALPSLPAGSGLKRSSGMSNLLGKIGAKKQKMSTLEKSKLDWESFKEEEGIGEELAIHNRGKEGYIERKAFLDRVDHRQFEIERDLRLSKMKP.

2 stretches are compositionally biased toward acidic residues: residues 1–18 and 25–43; these read MEEFDSEDFSTSEEDEDY and YSEDDVNELVKEDEVDGEE. Disordered regions lie at residues 1-154 and 190-221; these read MEEF…ELEK and FFKQNEKEKPQTNVPAALPSLPAGSGLKRSSG. The span at 48–65 shows a compositional bias: basic residues; the sequence is TKGKKRKAQSIPARKRKQ. The segment covering 69 to 78 has biased composition (acidic residues); sequence LEEEEEDANE. Phosphoserine is present on residues serine 80, serine 83, and serine 84. Over residues 93-110 the composition is skewed to basic and acidic residues; it reads EQEKGIGAEDARKKKEDE. Position 114 is a phosphoserine (serine 114). Lysine 148 is covalently cross-linked (Glycyl lysine isopeptide (Lys-Gly) (interchain with G-Cter in SUMO2)). Residues 176-215 form a hydrophilic region; the sequence is VTKEVDATSKEAKSFFKQNEKEKPQTNVPAALPSLPAGSG. Residues 190 to 199 are compositionally biased toward basic and acidic residues; sequence FFKQNEKEKP. Phosphoserine is present on serine 214. Positions 216–297 constitute a BCNT-C domain; it reads LKRSSGMSNL…RDLRLSKMKP (82 aa). The residue at position 217 (lysine 217) is an N6-methyllysine. The residue at position 248 (serine 248) is a Phosphoserine.

Its subcellular location is the chromosome. The protein localises to the centromere. It localises to the kinetochore. May play a role during embryogenesis. The sequence is that of Craniofacial development protein 1 (CFDP1) from Camelus dromedarius (Dromedary).